We begin with the raw amino-acid sequence, 455 residues long: ATP-dependent protease ATPase subunit HslU (455 aa).

ATP contacts are provided by residues Val23, 65–70 (GVGKTE), Asp266, Glu333, and Arg405.

Belongs to the ClpX chaperone family. HslU subfamily. As to quaternary structure, a double ring-shaped homohexamer of HslV is capped on each side by a ring-shaped HslU homohexamer. The assembly of the HslU/HslV complex is dependent on binding of ATP.

The protein resides in the cytoplasm. In terms of biological role, ATPase subunit of a proteasome-like degradation complex; this subunit has chaperone activity. The binding of ATP and its subsequent hydrolysis by HslU are essential for unfolding of protein substrates subsequently hydrolyzed by HslV. HslU recognizes the N-terminal part of its protein substrates and unfolds these before they are guided to HslV for hydrolysis. The chain is ATP-dependent protease ATPase subunit HslU from Xanthomonas euvesicatoria pv. vesicatoria (strain 85-10) (Xanthomonas campestris pv. vesicatoria).